Consider the following 374-residue polypeptide: L-serine/homoserine O-acetyltransferase (374 aa).

An AB hydrolase-1 domain is found at 46–357 (AVLVLTGLSP…TPAGHDAFLV (312 aa)). S149 acts as the Nucleophile in catalysis. Active-site residues include D319 and H352.

The protein belongs to the AB hydrolase superfamily. MetX family. As to quaternary structure, homodimer.

The protein resides in the cytoplasm. It carries out the reaction L-serine + acetyl-CoA = O-acetyl-L-serine + CoA. The catalysed reaction is L-homoserine + acetyl-CoA = O-acetyl-L-homoserine + CoA. The protein operates within antibiotic biosynthesis. Functionally, involved in the biosynthesis of the antibiotic D-cycloserine (DCS), a cyclic structural analog of D-alanine, used as an antitubercular agent. Catalyzes the transfer of the acetyl group from acetyl-CoA to the hydroxyl group of L-serine to yield the activated serine, O-acetyl-L-serine. It prefers L-serine over L-homoserine. This Streptomyces lavendulae protein is L-serine/homoserine O-acetyltransferase.